A 380-amino-acid polypeptide reads, in one-letter code: Cytochrome b (380 aa).

A run of 4 helical transmembrane segments spans residues 34-54, 78-99, 114-134, and 179-199; these read FGSL…LLAM, WLIR…FLHI, WNTG…GYVL, and FFAL…IHLT. Heme b-binding residues include His84 and His98. Residues His183 and His197 each coordinate heme b. His202 provides a ligand contact to a ubiquinone. The next 4 membrane-spanning stretches (helical) occupy residues 227 to 247, 289 to 309, 321 to 341, and 348 to 368; these read IKDI…TLFS, LGGV…PFLH, LSQT…WIGS, and FIII…ILFP.

This sequence belongs to the cytochrome b family. As to quaternary structure, the cytochrome bc1 complex contains 11 subunits: 3 respiratory subunits (MT-CYB, CYC1 and UQCRFS1), 2 core proteins (UQCRC1 and UQCRC2) and 6 low-molecular weight proteins (UQCRH/QCR6, UQCRB/QCR7, UQCRQ/QCR8, UQCR10/QCR9, UQCR11/QCR10 and a cleavage product of UQCRFS1). This cytochrome bc1 complex then forms a dimer. It depends on heme b as a cofactor.

The protein resides in the mitochondrion inner membrane. Functionally, component of the ubiquinol-cytochrome c reductase complex (complex III or cytochrome b-c1 complex) that is part of the mitochondrial respiratory chain. The b-c1 complex mediates electron transfer from ubiquinol to cytochrome c. Contributes to the generation of a proton gradient across the mitochondrial membrane that is then used for ATP synthesis. This is Cytochrome b (MT-CYB) from Alectoris graeca (Rock partridge).